The chain runs to 71 residues: MAQNSQNGNSSNQLLVPGAAQAIDQMKFEIASEFGVNLGAETTSRANGSVGGEITKRLVSFAQQNMSGQQF.

This sequence belongs to the alpha/beta-type SASP family.

Functionally, SASP are bound to spore DNA. They are double-stranded DNA-binding proteins that cause DNA to change to an a-like conformation. They protect the DNA backbone from chemical and enzymatic cleavage and are thus involved in dormant spore's high resistance to UV light. The chain is Small, acid-soluble spore protein 2 from Bacillus subtilis.